A 434-amino-acid polypeptide reads, in one-letter code: MSFNTLIDWNSCSPEQQRALLTRPAISASDSITRTVSDILYNVKTRGDDVLREYSAKFDKTEVTALRVTPEEIAAAGARLSDELKQAMAAAVKNIETFHSAQTLPPVDVETQPGVRCQQVTRPVASVGLYIPGGSAPLFSTVLMLATPARIAGCQKVVLCSPPPIADEILYAAQLCGVQEIFNVGGAQAIAALAFGSESVPKVDKIFGPGNAFVTEAKRQVSQRLDGAAIDMPAGPSEVLVIADSGATPDFVASDLLSQAEHGPDSQVILLTPDADIARKVAEAVERQLAELPRADTARQALSASRLIVTKDLAQCVAISNQYGPEHLIIQTRNARDLVDAITSAGSVFLGDWSPESAGDYASGTNHVLPTYGYTATCSSLGLADFQKRMTVQELSKAGFSALASTIETLAAAERLTAHKNAVTLRVNALKEQA.

NAD(+) contacts are provided by Y130, Q188, and N211. Substrate contacts are provided by S237, Q259, and H262. Zn(2+)-binding residues include Q259 and H262. Active-site proton acceptor residues include E326 and H327. The substrate site is built by H327, D360, E414, and H419. D360 provides a ligand contact to Zn(2+). H419 serves as a coordination point for Zn(2+).

The protein belongs to the histidinol dehydrogenase family. In terms of assembly, homodimer. Requires Zn(2+) as cofactor.

The catalysed reaction is L-histidinol + 2 NAD(+) + H2O = L-histidine + 2 NADH + 3 H(+). Its pathway is amino-acid biosynthesis; L-histidine biosynthesis; L-histidine from 5-phospho-alpha-D-ribose 1-diphosphate: step 9/9. Functionally, catalyzes the sequential NAD-dependent oxidations of L-histidinol to L-histidinaldehyde and then to L-histidine. The sequence is that of Histidinol dehydrogenase from Salmonella paratyphi A (strain ATCC 9150 / SARB42).